The chain runs to 397 residues: CCA-adding enzyme (397 aa).

Residues G26 and R29 each coordinate ATP. CTP contacts are provided by G26 and R29. Mg(2+) contacts are provided by D39 and D41. R110, D153, R156, R159, and R162 together coordinate ATP. 5 residues coordinate CTP: R110, D153, R156, R159, and R162.

Belongs to the tRNA nucleotidyltransferase/poly(A) polymerase family. Bacterial CCA-adding enzyme type 3 subfamily. Homodimer. It depends on Mg(2+) as a cofactor.

The enzyme catalyses a tRNA precursor + 2 CTP + ATP = a tRNA with a 3' CCA end + 3 diphosphate. It carries out the reaction a tRNA with a 3' CCA end + 2 CTP + ATP = a tRNA with a 3' CCACCA end + 3 diphosphate. Catalyzes the addition and repair of the essential 3'-terminal CCA sequence in tRNAs without using a nucleic acid template. Adds these three nucleotides in the order of C, C, and A to the tRNA nucleotide-73, using CTP and ATP as substrates and producing inorganic pyrophosphate. tRNA 3'-terminal CCA addition is required both for tRNA processing and repair. Also involved in tRNA surveillance by mediating tandem CCA addition to generate a CCACCA at the 3' terminus of unstable tRNAs. While stable tRNAs receive only 3'-terminal CCA, unstable tRNAs are marked with CCACCA and rapidly degraded. The polypeptide is CCA-adding enzyme (Bacillus thuringiensis subsp. konkukian (strain 97-27)).